A 400-amino-acid polypeptide reads, in one-letter code: Elongation factor Tu 1 (400 aa).

Residues 10–209 (KPHLNIGTIG…AVDSYIPLPQ (200 aa)) enclose the tr-type G domain. Positions 19–26 (GHIDHGKT) are G1. 19–26 (GHIDHGKT) is a GTP binding site. Thr26 contacts Mg(2+). The G2 stretch occupies residues 60–64 (GITIN). The interval 81–84 (DCPG) is G3. GTP-binding positions include 81 to 85 (DCPGH) and 136 to 139 (NKTD). Residues 136–139 (NKTD) are G4. The segment at 174 to 176 (SAL) is G5.

It belongs to the TRAFAC class translation factor GTPase superfamily. Classic translation factor GTPase family. EF-Tu/EF-1A subfamily. In terms of assembly, monomer.

Its subcellular location is the cytoplasm. The enzyme catalyses GTP + H2O = GDP + phosphate + H(+). GTP hydrolase that promotes the GTP-dependent binding of aminoacyl-tRNA to the A-site of ribosomes during protein biosynthesis. The polypeptide is Elongation factor Tu 1 (Syntrophomonas wolfei subsp. wolfei (strain DSM 2245B / Goettingen)).